The sequence spans 349 residues: Isopentenyl-diphosphate delta-isomerase (349 aa).

Residue 9-10 (RK) participates in substrate binding. FMN-binding positions include 65 to 67 (AMT), Ser-95, and Asn-124. 95 to 97 (STH) provides a ligand contact to substrate. Gln-154 serves as a coordination point for substrate. A Mg(2+)-binding site is contributed by Glu-155. FMN is bound by residues Lys-186, Ser-211, Thr-216, 262–264 (GLR), and 283–284 (SR).

This sequence belongs to the IPP isomerase type 2 family. Homooctamer. Dimer of tetramers. FMN serves as cofactor. NADPH is required as a cofactor. It depends on Mg(2+) as a cofactor.

Its subcellular location is the cytoplasm. It carries out the reaction isopentenyl diphosphate = dimethylallyl diphosphate. Its function is as follows. Involved in the biosynthesis of isoprenoids. Catalyzes the 1,3-allylic rearrangement of the homoallylic substrate isopentenyl (IPP) to its allylic isomer, dimethylallyl diphosphate (DMAPP). In Staphylococcus epidermidis (strain ATCC 35984 / DSM 28319 / BCRC 17069 / CCUG 31568 / BM 3577 / RP62A), this protein is Isopentenyl-diphosphate delta-isomerase.